The primary structure comprises 123 residues: PTS system glucitol/sorbitol-specific EIIA component (123 aa).

Residues 3-116 (VIYQTTITRI…PDDIAPGSVL (114 aa)) enclose the PTS EIIA type-5 domain. The Tele-phosphohistidine intermediate role is filled by H43. Residue H43 is modified to Phosphohistidine; by HPr.

It localises to the cytoplasm. The phosphoenolpyruvate-dependent sugar phosphotransferase system (sugar PTS), a major carbohydrate active transport system, catalyzes the phosphorylation of incoming sugar substrates concomitantly with their translocation across the cell membrane. The enzyme II complex composed of SrlA, SrlB and SrlE is involved in glucitol/sorbitol transport. It can also use D-mannitol. This Escherichia coli (strain K12) protein is PTS system glucitol/sorbitol-specific EIIA component (srlB).